The following is a 185-amino-acid chain: Translation initiation factor IF-3 (185 aa).

Belongs to the IF-3 family. Monomer.

Its subcellular location is the cytoplasm. In terms of biological role, IF-3 binds to the 30S ribosomal subunit and shifts the equilibrium between 70S ribosomes and their 50S and 30S subunits in favor of the free subunits, thus enhancing the availability of 30S subunits on which protein synthesis initiation begins. This chain is Translation initiation factor IF-3, found in Rickettsia felis (strain ATCC VR-1525 / URRWXCal2) (Rickettsia azadi).